The sequence spans 162 residues: Zinc finger protein 593 homolog (162 aa).

The C2H2-type zinc finger occupies 59–83; sequence FYCVHCAKYFIDDTAMQAHFRTKVH. The segment at 110 to 162 is disordered; sequence VKPKKRAMETQPSKEDVVAGKRIRVEVVPEDTDATDSPSTSKTKRKKVEKMET. Positions 115–136 are enriched in basic and acidic residues; the sequence is RAMETQPSKEDVVAGKRIRVEV. Positions 151–162 are enriched in basic residues; it reads KTKRKKVEKMET.

Belongs to the ZNF593/BUD20 C2H2-type zinc-finger protein family. As to quaternary structure, associates with pre-60S ribosomal particles; released from the pre-60S particle very early in the cytoplasm.

The protein resides in the nucleus. Its subcellular location is the cytoplasm. Involved in pre-60S ribosomal particles maturation by promoting the nuclear export of the 60S ribosome. The chain is Zinc finger protein 593 homolog from Drosophila melanogaster (Fruit fly).